The primary structure comprises 422 residues: Tryptophan synthase beta chain (422 aa).

N6-(pyridoxal phosphate)lysine is present on K111.

It belongs to the TrpB family. Tetramer of two alpha and two beta chains. It depends on pyridoxal 5'-phosphate as a cofactor.

The catalysed reaction is (1S,2R)-1-C-(indol-3-yl)glycerol 3-phosphate + L-serine = D-glyceraldehyde 3-phosphate + L-tryptophan + H2O. The protein operates within amino-acid biosynthesis; L-tryptophan biosynthesis; L-tryptophan from chorismate: step 5/5. In terms of biological role, the beta subunit is responsible for the synthesis of L-tryptophan from indole and L-serine. The protein is Tryptophan synthase beta chain of Pseudothermotoga lettingae (strain ATCC BAA-301 / DSM 14385 / NBRC 107922 / TMO) (Thermotoga lettingae).